The chain runs to 214 residues: Large ribosomal subunit protein uL16 (214 aa).

Arg-32 carries the post-translational modification Citrulline. Lys-175 participates in a covalent cross-link: Glycyl lysine isopeptide (Lys-Gly) (interchain with G-Cter in SUMO2). Lys-188 participates in a covalent cross-link: Glycyl lysine isopeptide (Lys-Gly) (interchain with G-Cter in ubiquitin).

Belongs to the universal ribosomal protein uL16 family. Component of the large ribosomal subunit. Mature ribosomes consist of a small (40S) and a large (60S) subunit. The 40S subunit contains about 33 different proteins and 1 molecule of RNA (18S). The 60S subunit contains about 49 different proteins and 3 molecules of RNA (28S, 5.8S and 5S). In terms of processing, citrullinated by PADI4. Ufmylated by UFL1.

It localises to the cytoplasm. In terms of biological role, component of the large ribosomal subunit. Plays a role in the formation of actively translating ribosomes. May play a role in the embryonic brain development. The sequence is that of Large ribosomal subunit protein uL16 from Rattus norvegicus (Rat).